A 208-amino-acid polypeptide reads, in one-letter code: Uracil phosphoribosyltransferase (208 aa).

Residues arginine 78, arginine 103, and 130 to 138 (DPMLATGGT) each bind 5-phospho-alpha-D-ribose 1-diphosphate. Uracil contacts are provided by residues isoleucine 193 and 198-200 (GDA). A 5-phospho-alpha-D-ribose 1-diphosphate-binding site is contributed by aspartate 199.

The protein belongs to the UPRTase family. It depends on Mg(2+) as a cofactor.

The enzyme catalyses UMP + diphosphate = 5-phospho-alpha-D-ribose 1-diphosphate + uracil. It functions in the pathway pyrimidine metabolism; UMP biosynthesis via salvage pathway; UMP from uracil: step 1/1. With respect to regulation, allosterically activated by GTP. Functionally, catalyzes the conversion of uracil and 5-phospho-alpha-D-ribose 1-diphosphate (PRPP) to UMP and diphosphate. The polypeptide is Uracil phosphoribosyltransferase (Nitratidesulfovibrio vulgaris (strain DSM 19637 / Miyazaki F) (Desulfovibrio vulgaris)).